The primary structure comprises 122 residues: Large ribosomal subunit protein bL12 (122 aa).

It belongs to the bacterial ribosomal protein bL12 family. In terms of assembly, homodimer. Part of the ribosomal stalk of the 50S ribosomal subunit. Forms a multimeric L10(L12)X complex, where L10 forms an elongated spine to which 2 to 4 L12 dimers bind in a sequential fashion. Binds GTP-bound translation factors.

In terms of biological role, forms part of the ribosomal stalk which helps the ribosome interact with GTP-bound translation factors. Is thus essential for accurate translation. The chain is Large ribosomal subunit protein bL12 from Shewanella loihica (strain ATCC BAA-1088 / PV-4).